A 510-amino-acid polypeptide reads, in one-letter code: Maturase K (510 aa).

It belongs to the intron maturase 2 family. MatK subfamily.

The protein localises to the plastid. It is found in the chloroplast. Usually encoded in the trnK tRNA gene intron. Probably assists in splicing its own and other chloroplast group II introns. In Cestrum elegans (Red cestrum), this protein is Maturase K.